A 428-amino-acid polypeptide reads, in one-letter code: MAENTPKPAAGTAPAKPKPAAPGAAKPAAPKAARPGAAKPAAKPAAPRAAAPSGVYKKPPVDRPDPNPFKDSKRDAVAGWFQERFYVLNPIIDYLKHKEVPKHALSFWYYFGGLGLFFFVIQILTGLLLLQYYKPTETDAFASFLFIQGEVPFGWLLRQIHAWSANLMIMMLFIHMFSTFFMKSYRKPRELMWVSGFVLLLLSLGFGFTGYLLPWNELAFFATQVGTEVPKVAPGGAFLVEILRGGPEVGGETLTRMFSLHVVLLPGLVMLVLAAHLTLVQILGTSAPIGYKEAGLIKGYDKFFPTFLAKDGIGWLIGFALLIYLAVMFPWEIGVKANPLSPAPLGIKPEWYFWAQFQLLKDFKFEGGELLAIILFTIGGVVWLLVPFIDRQASEEKKSPIFTIFGILVLAFLLINTYRVYAEYSMLK.

Low complexity-rich tracts occupy residues 1–15 and 21–52; these read MAEN…TAPA and APGA…AAAP. The disordered stretch occupies residues 1–72; it reads MAENTPKPAA…RPDPNPFKDS (72 aa). The span at 59-72 shows a compositional bias: basic and acidic residues; it reads PPVDRPDPNPFKDS. Residues 110–130 form a helical membrane-spanning segment; that stretch reads YFGGLGLFFFVIQILTGLLLL. 2 residues coordinate heme b: His-161 and His-175. The next 6 helical transmembrane spans lie at 162-182, 193-213, 260-280, 312-331, 369-389, and 401-421; these read AWSA…TFFM, WVSG…GYLL, LHVV…LTLV, GIGW…MFPW, ELLA…VPFI, and IFTI…YRVY. Residues His-261 and His-276 each coordinate heme b.

It belongs to the cytochrome b family. The cofactor is heme b.

It is found in the cell inner membrane. In terms of biological role, component of the green S-bacteria bc complex, which consists of the Rieske protein and cytochrome b subunit but appears to lack a cytochrome c1-equivalent. This complex has a comparatively low redox potential. This Chlorobaculum thiosulfatiphilum (Chlorobium limicola f.sp. thiosulfatophilum) protein is Cytochrome bc complex cytochrome b subunit (petB).